Consider the following 204-residue polypeptide: Protein Nef (204 aa).

The segment at 1-27 is disordered; it reads MGNKWSKSWPQVRDRMRRAAPAPAADG. Glycine 2 carries N-myristoyl glycine; by host lipidation. A Phosphoserine; by host modification is found at serine 6. The acidic; interacts with host PACS1 and PACS2; stabilizes the interaction of NEF/MHC-I with host AP1M1; necessary for MHC-I internalization stretch occupies residues 60–63; the sequence is TEEE. The tract at residues 67 to 76 is SH3-binding; interaction with Src family tyrosine kinases; sequence PVRPQVPLRP. The short motif at 70–73 is the PxxP; stabilizes the interaction of NEF/MHC-I with host AP1M1; necessary for MHC-I internalization element; sequence PQVP. The interval 106 to 122 is mediates dimerization, Nef-PTE1 interaction; the sequence is EILDLWVHNTQGYFPDW. The segment at 146 to 178 is binding to ATP6V1H; that stretch reads VDPSEVEEANEGENNCLLHPACQHGIEDEEREV. Positions 162 to 163 match the Dileucine internalization motif; necessary for CD4 internalization motif; the sequence is LL. A Diacidic; necessary for CD4 internalization motif is present at residues 172 to 173; it reads ED.

The protein belongs to the lentivirus primate group Nef protein family. As to quaternary structure, monomer; cytosolic form. Homodimer; membrane bound form. Interacts with Nef associated p21-activated kinase (PAK2); this interaction activates PAK2. Associates with the Nef-MHC-I-AP1 complex; this complex is required for MHC-I internalization. Interacts (via C-terminus) with host PI3-kinase. Interacts with host PACS1; this interaction seems to be weak. Interacts with host PACS2. Interacts with host LCK and MAPK3; these interactions inhibit the kinase activity of the latter. Interacts with host ATP6V1H; this interaction may play a role in CD4 endocytosis. Associates with the CD4-Nef-AP2 complex; this complex is required for CD4 internalization. Interacts with host AP2 subunit alpha and AP2 subunit sigma2. Interacts with TCR-zeta chain; this interaction up-regulates the Fas ligand (FasL) surface expression. Interacts with host HCK, LYN, and SRC; these interactions activate the Src family kinases. Interacts with MAP3K5; this interaction inhibits the Fas and TNFR-mediated death signals. Interacts with beta-COP and PTE1. Interacts with human RACK1; this increases Nef phosphorylation by PKC. Interacts with TP53; this interaction decreases the half-life of TP53, protecting the infected cell against p53-mediated apoptosis. In terms of processing, the virion-associated Nef proteins are cleaved by the viral protease to release the soluble C-terminal core protein. Nef is probably cleaved concomitantly with viral structural proteins on maturation of virus particles. Post-translationally, myristoylated. Phosphorylated on serine residues, probably by host PKCdelta and theta.

Its subcellular location is the host cell membrane. It is found in the virion. It localises to the secreted. The protein localises to the host Golgi apparatus membrane. Functionally, factor of infectivity and pathogenicity, required for optimal virus replication. Alters numerous pathways of T-lymphocyte function and down-regulates immunity surface molecules in order to evade host defense and increase viral infectivity. Alters the functionality of other immunity cells, like dendritic cells, monocytes/macrophages and NK cells. Its function is as follows. In infected CD4(+) T-lymphocytes, down-regulates the surface MHC-I, mature MHC-II, CD4, CD28, CCR5 and CXCR4 molecules. Mediates internalization and degradation of host CD4 through the interaction of with the cytoplasmic tail of CD4, the recruitment of AP-2 (clathrin adapter protein complex 2), internalization through clathrin coated pits, and subsequent transport to endosomes and lysosomes for degradation. Diverts host MHC-I molecules to the trans-Golgi network-associated endosomal compartments by an endocytic pathway to finally target them for degradation. MHC-I down-regulation may involve AP-1 (clathrin adapter protein complex 1) or possibly Src family kinase-ZAP70/Syk-PI3K cascade recruited by PACS2. In consequence infected cells are masked for immune recognition by cytotoxic T-lymphocytes. Decreasing the number of immune receptors also prevents reinfection by more HIV particles (superinfection). Down-regulates host SERINC3 and SERINC5 thereby excluding these proteins from the viral particles. Virion infectivity is drastically higher when SERINC3 or SERINC5 are excluded from the viral envelope, because these host antiviral proteins impair the membrane fusion event necessary for subsequent virion penetration. Bypasses host T-cell signaling by inducing a transcriptional program nearly identical to that of anti-CD3 cell activation. Interaction with TCR-zeta chain up-regulates the Fas ligand (FasL). Increasing surface FasL molecules and decreasing surface MHC-I molecules on infected CD4(+) cells send attacking cytotoxic CD8+ T-lymphocytes into apoptosis. In terms of biological role, plays a role in optimizing the host cell environment for viral replication without causing cell death by apoptosis. Protects the infected cells from apoptosis in order to keep them alive until the next virus generation is ready to strike. Inhibits the Fas and TNFR-mediated death signals by blocking MAP3K5/ASK1. Decreases the half-life of TP53, protecting the infected cell against p53-mediated apoptosis. Inhibits the apoptotic signals regulated by the Bcl-2 family proteins through the formation of a Nef/PI3-kinase/PAK2 complex that leads to activation of PAK2 and induces phosphorylation of host BAD. Functionally, extracellular Nef protein targets CD4(+) T-lymphocytes for apoptosis by interacting with CXCR4 surface receptors. This chain is Protein Nef, found in Homo sapiens (Human).